A 138-amino-acid chain; its full sequence is Mediator of RNA polymerase II transcription subunit 22 (138 aa).

Residues 13 to 40 (LKSYNSRLKEDIRSMRENFEEIIRLAKG) adopt a coiled-coil conformation.

The protein belongs to the Mediator complex subunit 22 family. In terms of assembly, component of the Mediator complex.

The protein resides in the nucleus. Functionally, component of the Mediator complex, a coactivator involved in the regulated transcription of nearly all RNA polymerase II-dependent genes. Mediator functions as a bridge to convey information from gene-specific regulatory proteins to the basal RNA polymerase II transcription machinery. Mediator is recruited to promoters by direct interactions with regulatory proteins and serves as a scaffold for the assembly of a functional preinitiation complex with RNA polymerase II and the general transcription factors. This Anopheles gambiae (African malaria mosquito) protein is Mediator of RNA polymerase II transcription subunit 22 (MED22).